The chain runs to 471 residues: Desmin (471 aa).

A head region spans residues 2-109 (SQAYSSSQRV…QEFLTTRTNE (108 aa)). Ser-7 carries the phosphoserine; by CDK1 modification. Position 12 is a phosphoserine; by AURKB (Ser-12). Position 16 is an omega-N-methylarginine (Arg-16). Residue Thr-17 is modified to Phosphothreonine; by AURKB and ROCK1. Residue Ser-28 is modified to Phosphoserine; by CDK1. Ser-31 is modified (phosphoserine). Phosphoserine; by CDK1 is present on Ser-32. An Asymmetric dimethylarginine; alternate modification is found at Arg-37. An Omega-N-methylarginine; alternate modification is found at Arg-37. Residue Ser-45 is modified to Phosphoserine. At Arg-58 the chain carries ADP-ribosylarginine. Residue Ser-60 is modified to Phosphoserine; by AURKB. Arg-70 bears the Omega-N-methylarginine mark. Thr-77 is modified (phosphothreonine; by ROCK1). Ser-81 is subject to Phosphoserine. The region spanning 109 to 417 (EKVELQELND…KLLEGEESRI (309 aa)) is the IF rod domain. Positions 110-142 (KVELQELNDRFANYIEKVRFLEQQNAALAAEVN) are coil 1A. Residues 143–152 (RLKGREPTRV) are linker 1. Residues 153–253 (AEIYEEELRE…HEEEIRELQA (101 aa)) are coil 1B. The interval 254–269 (QLQEQQVQVEMDMSKP) is linker 12. An interaction with NEB region spans residues 269–416 (PDLTAALRDI…RKLLEGEESR (148 aa)). A coil 2A region spans residues 270-288 (DLTAALRDIRAQYETIAAK). Positions 289 to 296 (NISEAEEW) are linker 2. Phosphoserine is present on residues Ser-291, Ser-359, Ser-362, and Ser-425. Positions 297-413 (YKSKVSDLTQ…ATYRKLLEGE (117 aa)) are coil 2B. Residues 414–471 (ESRINLPIQTFSALNFRETSPEQRGSEVHTKKTVMIKTIETRDGEVVSEATQQQHEVL) are tail. The interval 439–454 (SEVHTKKTVMIKTIET) is interaction with CRYAB.

The protein belongs to the intermediate filament family. In terms of assembly, homomer. Interacts with DST. Interacts with MTM1. Interacts with EPPK1; interaction is dependent of higher-order structure of intermediate filament. Interacts with CRYAB. Interacts with NEB (via nebulin repeats 160-164). Interacts (via rod region) with NEBL (via nebulin repeats 1-5). Interacts with ASB2; the interaction targets DES for proteasomal degradation. Interacts with PKP1. Interacts with FLII. Post-translationally, ADP-ribosylation prevents ability to form intermediate filaments. Phosphorylation at Ser-7, Ser-28 and Ser-32 by CDK1 and phosphorylation at Ser-60 by AURKB contribute to efficient separation of desmin intermediate filaments during mitosis. In terms of processing, ubiquitination by a SCF-like complex containing ASB2 leads to proteasomal degradation.

The protein resides in the cytoplasm. It is found in the myofibril. Its subcellular location is the sarcomere. It localises to the z line. The protein localises to the cell membrane. The protein resides in the sarcolemma. It is found in the nucleus. Its subcellular location is the cell tip. It localises to the nucleus envelope. In terms of biological role, muscle-specific type III intermediate filament essential for proper muscular structure and function. Plays a crucial role in maintaining the structure of sarcomeres, inter-connecting the Z-disks and forming the myofibrils, linking them not only to the sarcolemmal cytoskeleton, but also to the nucleus and mitochondria, thus providing strength for the muscle fiber during activity. In adult striated muscle they form a fibrous network connecting myofibrils to each other and to the plasma membrane from the periphery of the Z-line structures. May act as a sarcomeric microtubule-anchoring protein: specifically associates with detyrosinated tubulin-alpha chains, leading to buckled microtubules and mechanical resistance to contraction. Required for nuclear membrane integrity, via anchoring at the cell tip and nuclear envelope, resulting in maintenance of microtubule-derived intracellular mechanical forces. Contributes to the transcriptional regulation of the NKX2-5 gene in cardiac progenitor cells during a short period of cardiomyogenesis and in cardiac side population stem cells in the adult. Plays a role in maintaining an optimal conformation of nebulette (NEB) on heart muscle sarcomeres to bind and recruit cardiac alpha-actin. This Sus scrofa (Pig) protein is Desmin (DES).